Here is an 855-residue protein sequence, read N- to C-terminus: MSLPKTPSTPLNSASTSESKKLVSVATEGTRGLPELKEKKNMVDRSKPLPTSLLNEFIPKEVLLSLTYAANAGPCPENLLPPKKIKTPKGTLPRLVDHVWHHPVRRNKFKYLIDHPVSLTGAGRDISFLYDVKYTKGQTREKAVCPPHLARSLQSHDGVIVPHKPKTLTDTLIPEEFHIVSSTGVSGLECYDDKYTTLLTDSENRLLLFPSMKPNKRVEVAQLNDVMDTMLERAGVENQEYTGPTKMHKLLHILKKEQTIYNTIFHELIRQVSVDCADRGELLSKVRERYVQMLDQIARQMIDFYKDLVTQRVMDQRILEELYNFKHVIEELTRELCLVRAHDVKLTKETEKAHKDLAQALLDAEKNAKMVEEYHDLYTLQRERMENDMKQLMAERDIWSSATYELALKVIERNRVILARRLYLNEKGWNKYTKHLIILLANKDTEDLALLQKLTQKWRNLVNKFKQEVEEMEESTRETLKIVEKGLTKWQESFNEKDILSPNNGNVFDSVILDFKQWQKMLNEKKEEFTGDVLLSKYDTLKIIKHLQENWTDIGLGIFNRHKSLEGELPSERQYMEEIIKNIQKLYKEYEIRINGDNGYSKILPILISSLDFCSFKLENLEFPDTPLEEWQEIDEKINEMKLQLDLLLNLTGIVPQHIDMDSVSVLQAYIFNMIQQWLLKIGNEINNGNIELQRHMDELHISMIQWMVNLLILMIPNFTDQDCLLKLEEESAEKHDIGVARLELDAIELTRKLYQYSRYLSSSCEGMVTAMALSKSTTSHRNATEDLYEVDKLKKECYEWINTCSCLLSNIKGRKITLLTYEEIEQLLEEEAVKEFIEPEMDESLLCSRRILLP.

Positions 1 to 17 (MSLPKTPSTPLNSASTS) are enriched in polar residues. The interval 1–31 (MSLPKTPSTPLNSASTSESKKLVSVATEGTR) is disordered. 3 coiled-coil regions span residues 316-402 (QRIL…WSSA), 451-480 (LQKL…RETL), and 571-596 (SERQ…RING).

Its subcellular location is the cytoplasm. In terms of biological role, may be essential for spermiogenesis and male fertility probably by regulating the manchette dynamics, spermatid head shaping and sperm flagellum assembly. The protein is Axonemal dynein light chain domain-containing protein 1 (AXDND1) of Macaca fascicularis (Crab-eating macaque).